A 743-amino-acid chain; its full sequence is UV-stimulated scaffold protein A (743 aa).

A VHS-like region spans residues 2 to 145 (DQKLSELVEV…HFLKQNKKID (144 aa)). Positions 147–199 (QDVRSRTQAERKREEEKQRRLENIYKEKVKKATAEMEDMLEEIQSSLTEMENC) form a coiled coil. The segment at 221-310 (SDMRTKPTSQ…DDSDGDYEGS (90 aa)) is disordered. Positions 226-252 (KPTSQSPSHSKSTSQSSAYSKSTSQVS) are enriched in low complexity. Residues 283 to 300 (SLGEGAKESDKSARKSDT) are compositionally biased toward basic and acidic residues. A coiled-coil region spans residues 380 to 411 (ESLKCAIDVKKEIEAALKKYKEMNIDCHTKER). Disordered regions lie at residues 413–482 (VMTA…NDEL) and 500–525 (KALPGSSRNAGEPKSKCPKRETDLSQ). The segment covering 417-428 (SDDDDDDDEFEE) has biased composition (acidic residues). Basic and acidic residues-rich tracts occupy residues 429–447 (VPEKEGYEPHIPDHLREEY) and 510–522 (GEPKSKCPKRETD). Lys432 participates in a covalent cross-link: Glycyl lysine isopeptide (Lys-Gly) (interchain with G-Cter in ubiquitin). The UVSSA-type zinc finger occupies 591–618 (KHKCLAPMPNGSLCERQDRYKCPFHGKI). Cys594, Cys604, Cys612, and His615 together coordinate Zn(2+).

The protein belongs to the UVSSA family. Monoubiquitinated at Lys-432 in response to transcription stress; this promotes efficient transfer of TFIIH to stalled RNA polymerase II.

Its subcellular location is the chromosome. Functionally, factor involved in transcription-coupled nucleotide excision repair (TC-NER), a mechanism that rapidly removes RNA polymerase II-blocking lesions from the transcribed strand of active genes. Acts as a key adapter that promotes recruitment of factors involved in TC-NER. Facilitates the ubiquitination of the elongating form of RNA polymerase II (RNA pol IIo) at DNA damage sites, thereby promoting RNA pol IIo backtracking and access by the TC-NER machinery to lesion sites. Also promotes stabilization of ERCC6/CSB by recruiting deubiquitinating enzyme USP7 to TC-NER complexes, preventing UV-induced degradation of ERCC6 by the proteasome. Mediates the recruitment of the TFIIH complex and other factors that are required for nucleotide excision repair to RNA polymerase II. Also required to inactivate stalled RNA polymerase II by blocking the access of TCEA1/TFIIS, thereby preventing reactivation of RNA polymerase II. The polypeptide is UV-stimulated scaffold protein A (uvssa) (Xenopus tropicalis (Western clawed frog)).